The following is a 180-amino-acid chain: 5'(3')-deoxyribonucleotidase (180 aa).

Aspartate 9 serves as the catalytic Nucleophile. 3 residues coordinate Mg(2+): aspartate 9, aspartate 11, and aspartate 134. Aspartate 11 serves as the catalytic Proton donor.

Belongs to the 5'(3')-deoxyribonucleotidase family. Mg(2+) serves as cofactor.

Dephosphorylates nucleoside monophosphates such as the 5' and 2'(3')-phosphates of deoxyribonucleotides in vitro. In Clostridium acetobutylicum (strain ATCC 824 / DSM 792 / JCM 1419 / IAM 19013 / LMG 5710 / NBRC 13948 / NRRL B-527 / VKM B-1787 / 2291 / W), this protein is 5'(3')-deoxyribonucleotidase.